The sequence spans 198 residues: Peptide deformylase (198 aa).

2 residues coordinate Fe cation: Cys-123 and His-170. Residue Glu-171 is part of the active site. His-174 is a binding site for Fe cation.

It belongs to the polypeptide deformylase family. Requires Fe(2+) as cofactor.

The enzyme catalyses N-terminal N-formyl-L-methionyl-[peptide] + H2O = N-terminal L-methionyl-[peptide] + formate. Functionally, removes the formyl group from the N-terminal Met of newly synthesized proteins. Requires at least a dipeptide for an efficient rate of reaction. N-terminal L-methionine is a prerequisite for activity but the enzyme has broad specificity at other positions. This chain is Peptide deformylase, found in Mycoplasmopsis pulmonis (strain UAB CTIP) (Mycoplasma pulmonis).